The sequence spans 178 residues: N-alpha-acetyltransferase 80 (178 aa).

The N-acetyltransferase domain maps to 26 to 178; sequence VPIHNYPELM…AKKKYMKKVL (153 aa). Residues Arg48, 53 to 56, Asn88, and Ser98 each bind substrate; that span reads RMRS. Residues 99 to 101 and 107 to 112 each bind acetyl-CoA; these read VVV and GQGFGK. Residue Ser134 coordinates substrate. Gln138 lines the acetyl-CoA pocket.

It belongs to the acetyltransferase family.

It carries out the reaction N-terminal L-aspartyl-L-aspartyl-L-aspartyl-[protein] + acetyl-CoA = N-terminal N-acetyl-L-aspartyl-L-aspartyl-L-aspartyl-[protein] + CoA + H(+). The enzyme catalyses N-terminal L-glutamyl-L-glutamyl-L-glutamyl-[protein] + acetyl-CoA = N-terminal N-acetyl-L-glutamyl-L-glutamyl-L-glutamyl-[protein] + CoA + H(+). Its function is as follows. N-alpha-acetyltransferase that acetylates the amino terminal acidic residue of proteins devoid of initiator methionine. Preferentially acts on proteins starting with Asp-Asp-Asp and Glu-Glu-Glu sequences. In vitro, shows high activity towards N-terminal sequences starting with Met-Asp-Glu-Leu, Met-Glu-Glu-Glu and Met-Asp-Asp-Asp. In Drosophila melanogaster (Fruit fly), this protein is N-alpha-acetyltransferase 80.